The sequence spans 498 residues: Delta(14)-sterol reductase erg24A (498 aa).

Helical transmembrane passes span 30–50 (LGAFVFIFGLSTLIYCLTFLC), 91–111 (VTVWVLSYYVLSLVLYVFLPG), 136–156 (ILILGGLALGTYMHGADFVVW), and 163–183 (YVQIITANLIICVVLAIFVYA). Asparagine 257 carries N-linked (GlcNAc...) asparagine glycosylation. A run of 3 helical transmembrane segments spans residues 275–295 (IVLSTVFQTFYVLDALYMEPA), 302–322 (VIMDGFGYMLSFGHLVWVPFI), and 339–359 (LREILLILAVTGAGYAIFRGA). NADP(+) contacts are provided by residues lysine 363, arginine 367, tryptophan 395, and 402–403 (NY). An N-linked (GlcNAc...) asparagine glycan is attached at asparagine 429. A helical membrane pass occupies residues 444-464 (VRGWGMIFTYFFLVYFGALLI). NADP(+) is bound by residues aspartate 470, 474 to 478 (CKSKY), and tyrosine 485.

It belongs to the ERG4/ERG24 family.

It is found in the endoplasmic reticulum membrane. The protein operates within steroid metabolism; ergosterol biosynthesis. In terms of biological role, delta(14)-sterol reductase; part of the third module of ergosterol biosynthesis pathway that includes the late steps of the pathway. Catalyzes the reduction of the C14=C15 double bond within 4,4,24-trimethyl ergosta-8,14,24(28)-trienolto produce 4,4-dimethylfecosterol. The third module or late pathway involves the ergosterol synthesis itself through consecutive reactions that mainly occur in the endoplasmic reticulum (ER) membrane. Firstly, the squalene synthase erg9 catalyzes the condensation of 2 farnesyl pyrophosphate moieties to form squalene, which is the precursor of all steroids. Squalene synthase is crucial for balancing the incorporation of farnesyl diphosphate (FPP) into sterol and nonsterol isoprene synthesis. Secondly, squalene is converted into lanosterol by the consecutive action of the squalene epoxidase erg1 and the lanosterol synthase erg7. Then, the delta(24)-sterol C-methyltransferase erg6 methylates lanosterol at C-24 to produce eburicol. Eburicol is the substrate of the sterol 14-alpha demethylase encoded by cyp51A and cyp51B, to yield 4,4,24-trimethyl ergosta-8,14,24(28)-trienol. The C-14 reductase erg24 then reduces the C14=C15 double bond which leads to 4,4-dimethylfecosterol. A sequence of further demethylations at C-4, involving the C-4 demethylation complex containing the C-4 methylsterol oxidases erg25A or erg25B, the sterol-4-alpha-carboxylate 3-dehydrogenase erg26 and the 3-keto-steroid reductase erg27, leads to the production of fecosterol via 4-methylfecosterol. The C-8 sterol isomerase erg2 then catalyzes the reaction which results in unsaturation at C-7 in the B ring of sterols and thus converts fecosterol to episterol. The sterol-C5-desaturase erg3B then catalyzes the introduction of a C-5 double bond in the B ring to produce 5-dehydroepisterol. The 2 other sterol-C5-desaturases, erg3A and erg3C, seem to be less important in ergosterol biosynthesis. The C-22 sterol desaturase erg5 further converts 5-dehydroepisterol into ergosta-5,7,22,24(28)-tetraen-3beta-ol by forming the C-22(23) double bond in the sterol side chain. Finally, ergosta-5,7,22,24(28)-tetraen-3beta-ol is substrate of the C-24(28) sterol reductases erg4A and erg4B to produce ergosterol. Possible alternative sterol biosynthetic pathways might exist from fecosterol to ergosterol, depending on the activities of the erg3 isoforms. The protein is Delta(14)-sterol reductase erg24A of Aspergillus fumigatus (strain ATCC MYA-4609 / CBS 101355 / FGSC A1100 / Af293) (Neosartorya fumigata).